Here is a 284-residue protein sequence, read N- to C-terminus: uncharacterized protein (284 aa).

Belongs to the AtsA family.

This is an uncharacterized protein from Mycobacterium leprae (strain TN).